The primary structure comprises 502 residues: Glutamate dehydrogenase, mitochondrial (502 aa).

Residue 96–98 (HHR) coordinates NAD(+). Residues lysine 102 and lysine 126 each coordinate substrate. Aspartate 131 lines the NAD(+) pocket. The active site involves lysine 138. Residue serine 394 coordinates substrate.

This sequence belongs to the Glu/Leu/Phe/Val dehydrogenases family. Homohexamer.

It localises to the mitochondrion matrix. It catalyses the reaction L-glutamate + NAD(+) + H2O = 2-oxoglutarate + NH4(+) + NADH + H(+). The enzyme catalyses L-glutamate + NADP(+) + H2O = 2-oxoglutarate + NH4(+) + NADPH + H(+). Subject to allosteric regulation. Activated by AMP and ADP. The sequence is that of Glutamate dehydrogenase, mitochondrial (gluD) from Dictyostelium discoideum (Social amoeba).